A 331-amino-acid chain; its full sequence is Holliday junction branch migration complex subunit RuvB (331 aa).

A large ATPase domain (RuvB-L) region spans residues 1–178; sequence MRNSIFEQEE…FGITLRLDFY (178 aa). ATP is bound by residues leucine 17, arginine 18, glycine 59, lysine 62, threonine 63, threonine 64, 125–127, arginine 168, tyrosine 178, and arginine 215; that span reads EDY. Threonine 63 serves as a coordination point for Mg(2+). The segment at 179 to 249 is small ATPAse domain (RuvB-S); it reads TVSELLQLLQ…FADLALNKME (71 aa). Residues 252 to 331 are head domain (RuvB-H); the sequence is QFGLDKLDYT…LSTINSARLP (80 aa). Arginine 307 and arginine 312 together coordinate DNA.

Belongs to the RuvB family. As to quaternary structure, homohexamer. Forms an RuvA(8)-RuvB(12)-Holliday junction (HJ) complex. HJ DNA is sandwiched between 2 RuvA tetramers; dsDNA enters through RuvA and exits via RuvB. An RuvB hexamer assembles on each DNA strand where it exits the tetramer. Each RuvB hexamer is contacted by two RuvA subunits (via domain III) on 2 adjacent RuvB subunits; this complex drives branch migration. In the full resolvosome a probable DNA-RuvA(4)-RuvB(12)-RuvC(2) complex forms which resolves the HJ.

Its subcellular location is the cytoplasm. The catalysed reaction is ATP + H2O = ADP + phosphate + H(+). In terms of biological role, the RuvA-RuvB-RuvC complex processes Holliday junction (HJ) DNA during genetic recombination and DNA repair, while the RuvA-RuvB complex plays an important role in the rescue of blocked DNA replication forks via replication fork reversal (RFR). RuvA specifically binds to HJ cruciform DNA, conferring on it an open structure. The RuvB hexamer acts as an ATP-dependent pump, pulling dsDNA into and through the RuvAB complex. RuvB forms 2 homohexamers on either side of HJ DNA bound by 1 or 2 RuvA tetramers; 4 subunits per hexamer contact DNA at a time. Coordinated motions by a converter formed by DNA-disengaged RuvB subunits stimulates ATP hydrolysis and nucleotide exchange. Immobilization of the converter enables RuvB to convert the ATP-contained energy into a lever motion, pulling 2 nucleotides of DNA out of the RuvA tetramer per ATP hydrolyzed, thus driving DNA branch migration. The RuvB motors rotate together with the DNA substrate, which together with the progressing nucleotide cycle form the mechanistic basis for DNA recombination by continuous HJ branch migration. Branch migration allows RuvC to scan DNA until it finds its consensus sequence, where it cleaves and resolves cruciform DNA. The polypeptide is Holliday junction branch migration complex subunit RuvB (Neorickettsia sennetsu (strain ATCC VR-367 / Miyayama) (Ehrlichia sennetsu)).